Consider the following 387-residue polypeptide: Diphthine methyltransferase (387 aa).

WD repeat units lie at residues 62–102 (NTYG…KDDF), 119–159 (EKDV…VQFT), 195–237 (PHEL…FIWS), 241–286 (IHDA…ESIF), and 357–387 (GHDSMCYGGDWSNSLIATCSFYDNSLQTWIV).

It belongs to the DPH7 family. In terms of assembly, interacts with CAN1 and RTT10.

The protein localises to the cytoplasm. The protein resides in the endosome. The enzyme catalyses diphthine methyl ester-[translation elongation factor 2] + H2O = diphthine-[translation elongation factor 2] + methanol + H(+). It participates in protein modification; peptidyl-diphthamide biosynthesis. Catalyzes the demethylation of diphthine methyl ester to form diphthine, an intermediate in diphthamide biosynthesis, a post-translational modification of histidine which occurs in translation elongation factor 2 (EFT1 and EFT2). Also plays a role in the regulation of the retromer complex and is required for the recycling from endosomes of plasma membrane proteins like CAN1 and MUP1. Identified in a screen for mutants with decreased levels of rDNA transcription. This Saccharomyces cerevisiae (strain ATCC 204508 / S288c) (Baker's yeast) protein is Diphthine methyltransferase (RRT2).